Consider the following 354-residue polypeptide: RNA 3'-terminal phosphate cyclase (354 aa).

ATP is bound by residues Gln100 and 290–293 (HMGD). Residue His316 is the Tele-AMP-histidine intermediate of the active site.

This sequence belongs to the RNA 3'-terminal cyclase family. Type 1 subfamily.

Its subcellular location is the cytoplasm. It carries out the reaction a 3'-end 3'-phospho-ribonucleotide-RNA + ATP = a 3'-end 2',3'-cyclophospho-ribonucleotide-RNA + AMP + diphosphate. Catalyzes the conversion of 3'-phosphate to a 2',3'-cyclic phosphodiester at the end of RNA. The mechanism of action of the enzyme occurs in 3 steps: (A) adenylation of the enzyme by ATP; (B) transfer of adenylate to an RNA-N3'P to produce RNA-N3'PP5'A; (C) and attack of the adjacent 2'-hydroxyl on the 3'-phosphorus in the diester linkage to produce the cyclic end product. The biological role of this enzyme is unknown but it is likely to function in some aspects of cellular RNA processing. This chain is RNA 3'-terminal phosphate cyclase, found in Caldivirga maquilingensis (strain ATCC 700844 / DSM 13496 / JCM 10307 / IC-167).